A 695-amino-acid polypeptide reads, in one-letter code: Follicle-stimulating hormone receptor (695 aa).

Residues 1 to 17 (MALLLVSLLAFMSLGSG) form the signal peptide. 2 disulfides stabilise this stretch: C18-C25 and C23-C32. Residues 18-46 (CHHRLCHCSNRVFLCQESKVTEIPSDLPR) form the LRRNT domain. The Extracellular segment spans residues 18–366 (CHHRLCHCSN…EDIMGYNILR (349 aa)). LRR repeat units lie at residues 49–72 (VELRFVLTKLRVIPKGAFSGFGDL), 73–97 (EKIEISQNDALEVIEADVFSNLPNL), 98–118 (HEIRIEKANNLLYINPEAFQN), 119–143 (LPNLRYLLISNTGIRHLPAVHKIQS), 144–169 (LQKVLLDIQDNINIHTVERNSFLGLS), 170–192 (SESVILRLNKNGIQEIQNCAFNG), 193–216 (TQLDDLNLSDNDNLEELPNGVFQG), 217–240 (ASGPVILDISRTRINSLPSHGLEN), and 241–259 (LKKLRARSTYNLKKLPSLE). Residues N191 and N199 are each glycosylated (N-linked (GlcNAc...) asparagine). Cystine bridges form between C275–C346, C276–C292, C276–C356, and C292–C338. The N-linked (GlcNAc...) asparagine glycan is linked to N293. Residue Y335 is modified to Sulfotyrosine. Residues 367–387 (VLIWFISILAITGNVAVLVVL) form a helical membrane-spanning segment. Residues 388–398 (TTSQYKLTVPR) lie on the Cytoplasmic side of the membrane. The helical transmembrane segment at 399-421 (FLMCNLAFADLCIGIYLLLIASV) threads the bilayer. Residues 422-443 (DVHTRTLYHNYAIDWQTGAGCA) are Extracellular-facing. Residues C442 and C517 are joined by a disulfide bond. A helical membrane pass occupies residues 444 to 465 (DCWLFTVFASELSVYTLTAITL). The Cytoplasmic segment spans residues 466–485 (ERWHTITHAMQLDCKVQLRH). Residues 486–508 (AASIMVIGWIFSSAAALFPIFGV) form a helical membrane-spanning segment. Residues 509 to 528 (SSYMKVSICLPMDIDSPLSQ) are Extracellular-facing. A helical membrane pass occupies residues 529–550 (LYVMFLLVLNVLAFVVICGCYL). Residues 551–573 (HIYLTVRNPNIVSSASDTRIAKR) are Cytoplasmic-facing. The helical transmembrane segment at 574-597 (MATLIFTDFLCMAPISFFAISASL) threads the bilayer. Over 598–608 (KVPLITVSKAK) the chain is Extracellular. A helical transmembrane segment spans residues 609–630 (ILLVLFYPINSCANPFLYAIFT). At 631–695 (KNFRRDLFIL…LAPLNHLAQN (65 aa)) the chain is on the cytoplasmic side. The tract at residues 658–677 (TSSTAHNSHPRNGHSSSVSR) is disordered.

This sequence belongs to the G-protein coupled receptor 1 family. FSH/LSH/TSH subfamily. Homotrimer. Functions as a homotrimer binding the FSH hormone heterodimer composed of CGA and FSHB. Interacts with ARRB2. Interacts with APPL2; interaction is independent of follicle stimulating hormone stimulation. Post-translationally, N-glycosylated; indirectly required for FSH-binding, possibly via a conformational change that allows high affinity binding of hormone. In terms of processing, sulfated.

Its subcellular location is the cell membrane. In terms of biological role, g protein-coupled receptor for follitropin, the follicle-stimulating hormone. Through cAMP production activates the downstream PI3K-AKT and ERK1/ERK2 signaling pathways. This chain is Follicle-stimulating hormone receptor (FSHR), found in Cavia porcellus (Guinea pig).